A 399-amino-acid chain; its full sequence is MADRVVLAYSGGLDTSVAISWIGKETGAEVVAVAIDLGQGGEDMEVVRQRAIDCGAVESVVVDARDEFADEYCLPTIAANALYMDRYPLVSAISRPLIVKHIVEAARSHGGTIVSHGCTGKGNDQVRFEVGFGALAPDLQVIAPVRDYAWTREKAIAFAEENNIPINVSKKSPFSIDQNVWGRAVETGFLEDLWNAPTKDVYDYTQDPTVNWNAPDELIISFDKGRPVAIDGRPVSVLEAIQELNKRAGAQGVGRLDVVEDRLVGIKSREIYEAPGAMVLITAHQELEHVTLERELGRYKRQMEQRWSELVYDGLWFSPLKDALDTFVNKTQERVTGDIRLFLHGGAITVNGRRSPESLYDFNLATYDEGDSFDQSASKGFVEIHGLSSKVAAKRDLGL.

8 to 16 serves as a coordination point for ATP; sequence AYSGGLDTS. Tyr-87 is a binding site for L-citrulline. Gly-117 is a binding site for ATP. L-aspartate-binding residues include Thr-119, Asn-123, and Asp-124. Asn-123 contributes to the L-citrulline binding site. Positions 127, 175, 260, and 272 each coordinate L-citrulline.

Belongs to the argininosuccinate synthase family. Type 1 subfamily. Homotetramer.

It is found in the cytoplasm. The enzyme catalyses L-citrulline + L-aspartate + ATP = 2-(N(omega)-L-arginino)succinate + AMP + diphosphate + H(+). Its pathway is amino-acid biosynthesis; L-arginine biosynthesis; L-arginine from L-ornithine and carbamoyl phosphate: step 2/3. The sequence is that of Argininosuccinate synthase from Rhodococcus erythropolis (strain PR4 / NBRC 100887).